Consider the following 262-residue polypeptide: 7alpha-hydroxysteroid dehydrogenase (262 aa).

Residues 13-18 (SSTRGI), R38, 63-64 (NA), and N90 contribute to the NADP(+) site. Taurochenodeoxycholate contacts are provided by T145 and Y158. NADP(+) is bound by residues Y158, K162, and 191 to 195 (IGTRA). The active-site Proton acceptor is the Y158.

The protein belongs to the short-chain dehydrogenases/reductases (SDR) family. In terms of assembly, homotetramer. A dynamic equilibrium between dimers and tetramers seems to exist.

The catalysed reaction is cholate + NADP(+) = 3alpha,12alpha-dihydroxy-7-oxo-5beta-cholanate + NADPH + H(+). It catalyses the reaction chenodeoxycholate + NADP(+) = 7-oxolithocholate + NADPH + H(+). It carries out the reaction 3alpha,7alpha-dihydroxy-12-oxo-5beta-cholanate + NADP(+) = 7,12-dioxo-lithocholate + NADPH + H(+). The enzyme catalyses 7alpha-hydroxy-3,12-dioxo-5beta-cholanate + NADP(+) = dehydrocholate + NADPH + H(+). The catalysed reaction is glycochenodeoxycholate + NADP(+) = 7-oxoglycolithocholate + NADPH + H(+). It catalyses the reaction taurochenodeoxycholate + NADP(+) = 7-oxotaurolithocholate + NADPH + H(+). With respect to regulation, activated by metal ions such as Mg(2+), Na(+) and K(+). 7alpha-hydroxysteroid dehydrogenase that catalyzes the NADP(+)-dependent oxidation of the 7alpha-hydroxy group of 7alpha-hydroxysteroids, such as cholate, chenodeoxycholate, glycochenodeoxycholate and taurochenodeoxycholate, to the corresponding 7-oxosteroids. Is also able to catalyze the reverse reduction reactions. Together with 7beta-HSDH encoded in the adjacent gene, is likely involved in the epimerization of the hydroxy group at C-7 of primary bile acids through 7-keto bile acid intermediates. This is 7alpha-hydroxysteroid dehydrogenase from Clostridium sardiniense (Clostridium absonum).